A 728-amino-acid chain; its full sequence is Phosphoribosylformylglycinamidine synthase subunit PurL (728 aa).

The active site involves His-42. ATP contacts are provided by Tyr-45 and Lys-84. Glu-86 provides a ligand contact to Mg(2+). Substrate contacts are provided by residues 87 to 90 and Arg-109; that span reads SHNH. His-88 functions as the Proton acceptor in the catalytic mechanism. Position 110 (Asp-110) interacts with Mg(2+). Gln-237 is a binding site for substrate. Asp-265 contributes to the Mg(2+) binding site. 309–311 lines the substrate pocket; the sequence is ESQ. ATP-binding residues include Asp-491 and Gly-528. Asn-529 lines the Mg(2+) pocket. Ser-531 contributes to the substrate binding site.

Belongs to the FGAMS family. In terms of assembly, monomer. Part of the FGAM synthase complex composed of 1 PurL, 1 PurQ and 2 PurS subunits.

It localises to the cytoplasm. The enzyme catalyses N(2)-formyl-N(1)-(5-phospho-beta-D-ribosyl)glycinamide + L-glutamine + ATP + H2O = 2-formamido-N(1)-(5-O-phospho-beta-D-ribosyl)acetamidine + L-glutamate + ADP + phosphate + H(+). It participates in purine metabolism; IMP biosynthesis via de novo pathway; 5-amino-1-(5-phospho-D-ribosyl)imidazole from N(2)-formyl-N(1)-(5-phospho-D-ribosyl)glycinamide: step 1/2. In terms of biological role, part of the phosphoribosylformylglycinamidine synthase complex involved in the purines biosynthetic pathway. Catalyzes the ATP-dependent conversion of formylglycinamide ribonucleotide (FGAR) and glutamine to yield formylglycinamidine ribonucleotide (FGAM) and glutamate. The FGAM synthase complex is composed of three subunits. PurQ produces an ammonia molecule by converting glutamine to glutamate. PurL transfers the ammonia molecule to FGAR to form FGAM in an ATP-dependent manner. PurS interacts with PurQ and PurL and is thought to assist in the transfer of the ammonia molecule from PurQ to PurL. The chain is Phosphoribosylformylglycinamidine synthase subunit PurL from Campylobacter jejuni subsp. jejuni serotype O:2 (strain ATCC 700819 / NCTC 11168).